The chain runs to 498 residues: WD repeat-containing protein 55 homolog (498 aa).

Residues 1-131 are disordered; it reads MHTHNNFKTP…ATFDLDEDDE (131 aa). Composition is skewed to acidic residues over residues 12–23 and 31–48; these read DEDELDDLDEDM and IEQEVLNESDSDNDEYDL. WD repeat units lie at residues 154-193, 198-237, 241-279, 282-321, 324-363, and 408-447; these read KLEDFITDICFHPDRDIIALATIIGDVHLYEYDNEANKLL, VHSKACRDVEFTEDGRFLLTCSKDKCVMVTDMETEKLKKL, AHDDAINTLHVLNENLFASGDDAGTVKLWDLRTKNAIFE, ELEDQITQLTTNEQSKLLLATSADGYLTTFNISARKMYVQ, PYEEELNCMGVYRGDSKLVVGTSKGRLYTYNWGQFGYHCD, and QHNMPIESLDVNASGELIASSSHNNDVRFWNVKYFEDFGE.

This sequence belongs to the WD repeat WDR55 family.

The protein is WD repeat-containing protein 55 homolog of Drosophila simulans (Fruit fly).